A 444-amino-acid polypeptide reads, in one-letter code: E1B 55 kDa protein (444 aa).

Residues 1–27 (MEQDSDLESGRATNQRPPRVRVRGAGV) form a disordered region. Residues Ser-438 and Ser-439 each carry the phosphoserine modification.

Belongs to the adenoviridae E1B 55 kDa protein family. As to quaternary structure, interacts with host PML-4 and PML-5; this interaction promotes efficient subnuclear targeting of E1B-55K to PML nuclear bodies. Interacts with E4-ORF3 protein. Interacts with E4-ORF6 protein.

It is found in the host nucleus. The protein resides in the host cytoplasm. In terms of biological role, plays a major role to prevent cellular inhibition of viral genome replication. Assembles an SCF-like E3 ubiquitin ligase complex based on the cellular proteins ELOB, ELOC, CUL5 and RBX1, in cooperation with viral E4orf6. This viral RING-type ligase ubiquitinates cellular substrates and targets them to proteasomal degradation: TP53/p53, LIG4, MRE11-RAD50-NBS1 (MRN) complex, ITGA3, DAXX and BLM. E1B-55K probably acts as the substrate-specific adapter of the SCF-like E3 ubiquitin ligase complex. Degradation of host TP53/p53 activity is essential for preventing E1A-induced TP53 accumulation that would otherwise lead to cell apoptosis and growth arrest. E1B-55K also inactivates TP53 transcription-factor activity by binding its transactivation domain. E1B-55K also functions as a SUMO1 E3 ligase for TP53 which causes the latter to be sequestered in promyelocytic leukemia (PML) nuclear bodies thereby contributing to maximal inhibition of TP53 function. This chain is E1B 55 kDa protein, found in Canis lupus familiaris (Dog).